We begin with the raw amino-acid sequence, 570 residues long: Formate--tetrahydrofolate ligase (570 aa).

65 to 72 (TPFGEGKT) provides a ligand contact to ATP.

It belongs to the formate--tetrahydrofolate ligase family.

It catalyses the reaction (6S)-5,6,7,8-tetrahydrofolate + formate + ATP = (6R)-10-formyltetrahydrofolate + ADP + phosphate. It participates in one-carbon metabolism; tetrahydrofolate interconversion. This is Formate--tetrahydrofolate ligase from Shewanella sediminis (strain HAW-EB3).